The following is a 138-amino-acid chain: Large ribosomal subunit protein mL54 (138 aa).

The N-terminal 14 residues, methionine 1–alanine 14, are a transit peptide targeting the mitochondrion.

Belongs to the mitochondrion-specific ribosomal protein mL54 family. As to quaternary structure, component of the mitochondrial large ribosomal subunit (mt-LSU). Mature mammalian 55S mitochondrial ribosomes consist of a small (28S) and a large (39S) subunit. The 28S small subunit contains a 12S ribosomal RNA (12S mt-rRNA) and 30 different proteins. The 39S large subunit contains a 16S rRNA (16S mt-rRNA), a copy of mitochondrial valine transfer RNA (mt-tRNA(Val)), which plays an integral structural role, and 52 different proteins.

Its subcellular location is the mitochondrion. This Homo sapiens (Human) protein is Large ribosomal subunit protein mL54 (MRPL54).